Here is a 98-residue protein sequence, read N- to C-terminus: uncharacterized protein (98 aa).

It belongs to the YciI family. In terms of assembly, homodimer.

This is an uncharacterized protein from Haemophilus influenzae (strain ATCC 51907 / DSM 11121 / KW20 / Rd).